The following is a 413-amino-acid chain: Putative ankyrin repeat protein L92 (413 aa).

ANK repeat units follow at residues 1–28 (MCAC…DINC), 32–67 (DGMS…DVNL), 68–104 (TVDG…LFES), 105–134 (DDDD…NIEA), 137–170 (DGET…KTNI), 174–208 (DRKT…NINY), 212–242 (IGET…NPNI), and 246–275 (SGNT…SPEI).

This is Putative ankyrin repeat protein L92 from Acanthamoeba polyphaga mimivirus (APMV).